Here is a 58-residue protein sequence, read N- to C-terminus: Small ribosomal subunit protein bS21 (58 aa).

Residues 37–58 form a disordered region; the sequence is FYDKPSVKKRAKSKAAAKYRGR. Positions 43–58 are enriched in basic residues; sequence VKKRAKSKAAAKYRGR.

It belongs to the bacterial ribosomal protein bS21 family.

This is Small ribosomal subunit protein bS21 (rpsU) from Chlamydia muridarum (strain MoPn / Nigg).